Consider the following 618-residue polypeptide: uncharacterized protein (618 aa).

Residues 18–47 (SCQRCRQRKIKCDRLHPCFQCVKSNSQCFY) constitute a DNA-binding region (zn(2)-C6 fungal-type). Residue Ser-598 is modified to Phosphoserine.

It localises to the nucleus. This is an uncharacterized protein from Schizosaccharomyces pombe (strain 972 / ATCC 24843) (Fission yeast).